Reading from the N-terminus, the 275-residue chain is Polyamine aminopropyltransferase 1 (275 aa).

Residues 2 to 235 (ELWFTEKQTK…GLWTFTIGSK (234 aa)) form the PABS domain. Gln31 contacts S-methyl-5'-thioadenosine. His62 and Asp86 together coordinate spermidine. Residues Glu106 and 137–138 (DG) each bind S-methyl-5'-thioadenosine. Catalysis depends on Asp155, which acts as the Proton acceptor. 155–158 (DSTE) is a spermidine binding site. Pro162 is an S-methyl-5'-thioadenosine binding site.

The protein belongs to the spermidine/spermine synthase family. As to quaternary structure, homodimer or homotetramer.

The protein localises to the cytoplasm. The enzyme catalyses S-adenosyl 3-(methylsulfanyl)propylamine + putrescine = S-methyl-5'-thioadenosine + spermidine + H(+). It functions in the pathway amine and polyamine biosynthesis; spermidine biosynthesis; spermidine from putrescine: step 1/1. Its function is as follows. Catalyzes the irreversible transfer of a propylamine group from the amino donor S-adenosylmethioninamine (decarboxy-AdoMet) to putrescine (1,4-diaminobutane) to yield spermidine. The chain is Polyamine aminopropyltransferase 1 from Bacillus cereus (strain ATCC 14579 / DSM 31 / CCUG 7414 / JCM 2152 / NBRC 15305 / NCIMB 9373 / NCTC 2599 / NRRL B-3711).